The primary structure comprises 417 residues: Solute carrier family 25 member 46-A (417 aa).

The segment covering 1 to 13 (MQPRRPDRFDGLE) has biased composition (basic and acidic residues). Positions 1–90 (MQPRRPDRFD…AFGEENSNSA (90 aa)) are disordered. Low complexity predominate over residues 31–41 (SSFPARSFSSS). A Solcar 1 repeat occupies 95-186 (QLNRFAGFGI…GILSEFTHLP (92 aa)). 6 helical membrane passes run 102–122 (FGIG…CIVL), 162–182 (MGST…LSEF), 198–218 (IGGH…FYSA), 257–277 (LLPL…HYIV), 313–333 (FPEL…LYPL), and 382–402 (LGFY…AIVL). The stretch at 310–415 (EDYFPELIAN…KIIYSSVVQT (106 aa)) is one Solcar 2 repeat.

Belongs to the mitochondrial carrier (TC 2.A.29) family.

It is found in the mitochondrion outer membrane. May play a role in mitochondrial dynamics by controlling mitochondrial membrane fission. The chain is Solute carrier family 25 member 46-A (slc25a46-a) from Xenopus laevis (African clawed frog).